A 424-amino-acid polypeptide reads, in one-letter code: GTPase Obg (424 aa).

The Obg domain maps to 1–160; the sequence is MFDRVEINIK…YDLILELKLI (160 aa). The region spanning 161–328 is the OBG-type G domain; that stretch reads ADVAIIGYPN…LLAKVAEKLD (168 aa). Residues 167–174, 192–196, 213–216, 280–283, and 309–311 contribute to the GTP site; these read GYPNVGKS, FTTLS, EVPG, NKID, and SAL. 2 residues coordinate Mg(2+): serine 174 and threonine 194. In terms of domain architecture, OCT spans 349–424; it reads PAPKGKMGFR…IITGRMEWYL (76 aa).

Belongs to the TRAFAC class OBG-HflX-like GTPase superfamily. OBG GTPase family. As to quaternary structure, monomer. Mg(2+) serves as cofactor.

The protein localises to the cytoplasm. Its function is as follows. An essential GTPase which binds GTP, GDP and possibly (p)ppGpp with moderate affinity, with high nucleotide exchange rates and a fairly low GTP hydrolysis rate. Plays a role in control of the cell cycle, stress response, ribosome biogenesis and in those bacteria that undergo differentiation, in morphogenesis control. This chain is GTPase Obg, found in Dehalococcoides mccartyi (strain ATCC BAA-2100 / JCM 16839 / KCTC 5957 / BAV1).